Here is a 385-residue protein sequence, read N- to C-terminus: MKALQFGAGNIGRGFIGKTLSESGFSVIFSDVNQNIVDAINYNREYFVKIIGSNQNKTVNIKRVSAINSNDSNIKKIISSVDLITTAVGPTALEKIALIITQGIIFKIKNQFTKPLNIIACENKIKSSSFLKQVVLKNLPIKYHDYLNKYIGFIDCSIDTIIPSINNKDDLFLTVEEFKEWIVNINQFKGAVPKIVDMKFSNNLDAFIERKLFTLNTGHAIAAYLGLIKNYKTIQDAISDKKIRVIVRSAMEESGSVLIKRYNFNKNDHLDYIEKIFLRFENPFLSDKLERIGRNPLQKLRREDRLIKPFLGAFEYNLPYSNLAKGIAAAFYYHNKNDLESIELSSSIKKQGLESTIIKICDLPVNSKEVYSIILEYNLIKKIIR.

Position 3-14 (3-14) interacts with NAD(+); the sequence is ALQFGAGNIGRG.

Belongs to the mannitol dehydrogenase family.

The enzyme catalyses D-mannitol 1-phosphate + NAD(+) = beta-D-fructose 6-phosphate + NADH + H(+). The polypeptide is Mannitol-1-phosphate 5-dehydrogenase (Buchnera aphidicola subsp. Acyrthosiphon pisum (strain Tuc7)).